A 99-amino-acid chain; its full sequence is Protein adenylyltransferase MntA (99 aa).

A GSX(10)DXD motif motif is present at residues 33–47 (GSYVRGEAKEDSDVD). Catalysis depends on residues aspartate 45 and aspartate 47. Residues aspartate 45, aspartate 47, and aspartate 77 each contribute to the Mg(2+) site.

It belongs to the MntA antitoxin family. Mg(2+) serves as cofactor.

It catalyses the reaction L-tyrosyl-[protein] + ATP = O-(5'-adenylyl)-L-tyrosyl-[protein] + diphosphate. The enzyme catalyses O-(5'-adenylyl)-L-tyrosyl-[protein] + ATP = O-[5'-(adenylyl-(5'-&gt;3')-adenylyl)]-L-tyrosyl-[protein] + diphosphate. In terms of biological role, antitoxin component of a type VII toxin-antitoxin (TA) system. Overexpression in E.coli neutralizes the toxic effect of cognate toxin HepT. Neutralization is mostly due to AMPylation of the toxin by this enzyme. The protein is Protein adenylyltransferase MntA of Thermococcus cleftensis (strain DSM 27260 / KACC 17922 / CL1).